An 88-amino-acid polypeptide reads, in one-letter code: Small ribosomal subunit protein uS15c (88 aa).

It belongs to the universal ribosomal protein uS15 family. Part of the 30S ribosomal subunit.

The protein localises to the plastid. The protein resides in the chloroplast. The chain is Small ribosomal subunit protein uS15c (rps15) from Nasturtium officinale (Watercress).